Reading from the N-terminus, the 350-residue chain is Sulfate-binding protein (350 aa).

The first 40 residues, 1–40 (MKTAWTRRSFLQSAALATATVITIAACGGNNQSSSGGSGQ), serve as a signal peptide directing secretion.

Belongs to the prokaryotic sulfate-binding protein family.

Its subcellular location is the periplasm. Functionally, this protein specifically binds sulfate and is involved in its transmembrane transport. This Synechococcus elongatus (strain ATCC 33912 / PCC 7942 / FACHB-805) (Anacystis nidulans R2) protein is Sulfate-binding protein (sbpA).